A 62-amino-acid chain; its full sequence is Photosystem II reaction center protein Z (62 aa).

Helical transmembrane passes span 8 to 28 (AVFA…VVLA) and 41 to 61 (FSGA…NSLI).

Belongs to the PsbZ family. In terms of assembly, PSII is composed of 1 copy each of membrane proteins PsbA, PsbB, PsbC, PsbD, PsbE, PsbF, PsbH, PsbI, PsbJ, PsbK, PsbL, PsbM, PsbT, PsbY, PsbZ, Psb30/Ycf12, at least 3 peripheral proteins of the oxygen-evolving complex and a large number of cofactors. It forms dimeric complexes.

It localises to the plastid. The protein localises to the chloroplast thylakoid membrane. May control the interaction of photosystem II (PSII) cores with the light-harvesting antenna, regulates electron flow through the 2 photosystem reaction centers. PSII is a light-driven water plastoquinone oxidoreductase, using light energy to abstract electrons from H(2)O, generating a proton gradient subsequently used for ATP formation. This Huperzia lucidula (Shining clubmoss) protein is Photosystem II reaction center protein Z.